A 362-amino-acid chain; its full sequence is Ribosome-binding ATPase YchF (362 aa).

In terms of domain architecture, OBG-type G spans 2-258; that stretch reads LSAGIVGLPN…LDANGRQDWL (257 aa). An ATP-binding site is contributed by 11 to 16; that stretch reads NVGKST. Residues Ser-15 and Thr-35 each coordinate Mg(2+). Residues 281–347 enclose the TGS domain; the sequence is GLWSFFTFGK…EAKKQGLVRL (67 aa).

The protein belongs to the TRAFAC class OBG-HflX-like GTPase superfamily. OBG GTPase family. YchF/OLA1 subfamily. It depends on Mg(2+) as a cofactor.

ATPase that binds to both the 70S ribosome and the 50S ribosomal subunit in a nucleotide-independent manner. The polypeptide is Ribosome-binding ATPase YchF (Mycoplasma pneumoniae (strain ATCC 29342 / M129 / Subtype 1) (Mycoplasmoides pneumoniae)).